The sequence spans 65 residues: Hainantoxin-X (65 aa).

The first 20 residues, 1 to 20 (MNMKILVLVAVLCLVVSTHA), serve as a signal peptide directing secretion. A propeptide spanning residues 21 to 37 (ERHSKTDMEDSPMIQER) is cleaved from the precursor. 3 cysteine pairs are disulfide-bonded: cysteine 39–cysteine 56, cysteine 46–cysteine 59, and cysteine 55–cysteine 64.

It belongs to the neurotoxin 36 family. 02 subfamily. In terms of tissue distribution, expressed by the venom gland.

It localises to the secreted. Reversibly blocks N-type calcium channels (Cav2.2/CACNA1B) in rat dorsal root ganglion cells. Elicits no toxic symptoms in either vertebrates or invertebrates during a period of 48 hours post-injection, when it was assayed in vivo by direct injection into mice and cockroaches. The polypeptide is Hainantoxin-X (Cyriopagopus hainanus (Chinese bird spider)).